The chain runs to 623 residues: uncharacterized protein (623 aa).

A compositionally biased stretch (basic and acidic residues) spans 157–166 (LNESPLRDQQ). Residues 157 to 237 (LNESPLRDQQ…QGLPDHNNSI (81 aa)) form a disordered region. Polar residues predominate over residues 167–177 (ESSTPSKNSTL). Residues 193-210 (AFRPLPSPSRRSSQSAPA) are compositionally biased toward low complexity.

This is an uncharacterized protein from Macaca fascicularis (Crab-eating macaque).